The chain runs to 314 residues: Vacuolar membrane protein VL3_4134 (314 aa).

The segment at K32 to A60 is disordered. A helical transmembrane segment spans residues V93–L113. S148, S254, and S274 each carry phosphoserine. Positions E240 to N309 are disordered. Positions S254 to H269 are enriched in basic and acidic residues.

It belongs to the PRM5 family.

Its subcellular location is the vacuole membrane. In Saccharomyces cerevisiae (strain Zymaflore VL3) (Baker's yeast), this protein is Vacuolar membrane protein VL3_4134.